The chain runs to 312 residues: Beta-ketoacyl-[acyl-carrier-protein] synthase III (312 aa).

Active-site residues include C112 and H237. The interval 238–242 (QANIR) is ACP-binding. The active site involves N267.

The protein belongs to the thiolase-like superfamily. FabH family. As to quaternary structure, homodimer.

The protein localises to the cytoplasm. It catalyses the reaction (2S)-2-methylbutanoyl-CoA + malonyl-[ACP] + H(+) = (4S)-4-methyl-3-oxohexanoyl-[ACP] + CO2 + CoA. It carries out the reaction 2-methylpropanoyl-CoA + malonyl-[ACP] + H(+) = 4-methyl-3-oxopentanoyl-[ACP] + CO2 + CoA. The catalysed reaction is 3-methylbutanoyl-CoA + malonyl-[ACP] + H(+) = 5-methyl-3-oxohexanoyl-[ACP] + CO2 + CoA. The enzyme catalyses malonyl-[ACP] + acetyl-CoA + H(+) = 3-oxobutanoyl-[ACP] + CO2 + CoA. The protein operates within lipid metabolism; fatty acid biosynthesis. Functionally, catalyzes the condensation reaction of fatty acid synthesis by the addition to an acyl acceptor of two carbons from malonyl-ACP. Catalyzes the first condensation reaction which initiates fatty acid synthesis and may therefore play a role in governing the total rate of fatty acid production. Possesses both acetoacetyl-ACP synthase and acetyl transacylase activities. Can use branched-chain acyl-CoAs, with a preference for 2-methylbutanoyl-CoA, the precursor of odd-numbered anteiso fatty acids, at 30 degrees Celsius, which is further increased at a low temperature. Shows weak activity with acetyl-CoA. The sequence is that of Beta-ketoacyl-[acyl-carrier-protein] synthase III from Listeria monocytogenes serotype 1/2a (strain 10403S).